Reading from the N-terminus, the 804-residue chain is Protein SEY1 homolog 1 (804 aa).

The Cytoplasmic portion of the chain corresponds to M1 to H638. The GB1/RHD3-type G domain maps to G28–S245. G38–S45 lines the GTP pocket. The helical transmembrane segment at I639–L659 threads the bilayer. Topologically, residues S660–P662 are lumenal. The helical transmembrane segment at L663–L683 threads the bilayer. Topologically, residues W684–V804 are cytoplasmic. The interval P706–V804 is disordered. Over residues Q751–G791 the composition is skewed to polar residues. Basic residues predominate over residues Q792–V804.

Belongs to the TRAFAC class dynamin-like GTPase superfamily. GB1/RHD3 GTPase family. RHD3 subfamily.

The protein resides in the endoplasmic reticulum membrane. Its function is as follows. Probable GTP-binding protein that may be involved in cell development. The protein is Protein SEY1 homolog 1 of Trichomonas vaginalis (strain ATCC PRA-98 / G3).